Consider the following 465-residue polypeptide: Ribosomal protein uS12 methylthiotransferase RimO (465 aa).

The 117-residue stretch at 1–117 folds into the MTTase N-terminal domain; sequence MKVGFISLGC…IVDICEGMPP (117 aa). 6 residues coordinate [4Fe-4S] cluster: cysteine 10, cysteine 46, cysteine 80, cysteine 150, cysteine 154, and cysteine 157. Positions 136 to 369 constitute a Radical SAM core domain; the sequence is ATPRHFAYMK…AIQRKIARAR (234 aa). The region spanning 371–442 is the TRAM domain; it reads RGLVGKEVPV…DYDVVGTLLA (72 aa).

Belongs to the methylthiotransferase family. RimO subfamily. It depends on [4Fe-4S] cluster as a cofactor.

Its subcellular location is the cytoplasm. It carries out the reaction L-aspartate(89)-[ribosomal protein uS12]-hydrogen + (sulfur carrier)-SH + AH2 + 2 S-adenosyl-L-methionine = 3-methylsulfanyl-L-aspartate(89)-[ribosomal protein uS12]-hydrogen + (sulfur carrier)-H + 5'-deoxyadenosine + L-methionine + A + S-adenosyl-L-homocysteine + 2 H(+). Its function is as follows. Catalyzes the methylthiolation of an aspartic acid residue of ribosomal protein uS12. This Solibacter usitatus (strain Ellin6076) protein is Ribosomal protein uS12 methylthiotransferase RimO.